Reading from the N-terminus, the 466-residue chain is Chromogranin-A (466 aa).

The N-terminal stretch at 1–18 (MRSSAALALLLCAGQVFA) is a signal peptide. Cys-35 and Cys-56 are oxidised to a cystine. The tract at residues 91–443 (AQQQQQQQQQ…ANRRAEDQEL (353 aa)) is disordered. Residues 92–111 (QQQQQQQQQQQQQQQQQQQQ) show a composition bias toward low complexity. The residue at position 114 (Ser-114) is a Phosphoserine. Basic and acidic residues predominate over residues 131 to 155 (KHGDAASEAPSKDTVEKREDSDKGQ). Residues 177–213 (ESSMMGNSQSPGEDTANNTQSPTSLPSQEHGIPQTTE) show a composition bias toward polar residues. Phosphoserine is present on Ser-215. Acidic residues predominate over residues 233–247 (KEEEEEEKEEEEEEK). The span at 248–259 (EEKAIAREKAGP) shows a compositional bias: basic and acidic residues. Phosphoserine occurs at positions 288 and 312. The segment covering 305–314 (GKGELEHSQQ) has biased composition (basic and acidic residues). Gly-332 bears the Glycine amide mark. Residues 351–378 (RLSREWEDKRWSRMDQLAKELTAEKRLE) show a composition bias toward basic and acidic residues. A phosphoserine mark is found at Ser-353 and Ser-386. Position 387 is a methionine sulfoxide (Met-387). The segment covering 412–440 (SSREDSVEARGDFEEKKEEEGSANRRAED) has biased composition (basic and acidic residues). 3 positions are modified to phosphoserine: Ser-413, Ser-417, and Ser-433. A glycan (O-linked (Xyl...) (chondroitin sulfate) serine) is linked at Ser-433. A Pyrrolidone carboxylic acid modification is found at Gln-441. Ser-447 is subject to Phosphoserine.

This sequence belongs to the chromogranin/secretogranin protein family. Self-interacts; self-assembly is promoted in vitro by chondroitin sulfate attachment which occurs at mildly acidic pH conditions. Interacts with SCG3; this interaction is optimal in conditions mimicking the lumenal milieu of the trans-Golgi network, i.e. pH 5.5 and 10 mM Ca(+2). Interacts with ITPR1 in the secretory granules. Post-translationally, O-glycosylated; contains chondroitin sulfate (CS). CS attachment is pH-dependent, being observed at mildly acidic conditions of pH 5 but not at neutral pH, and promotes self-assembly in vitro. Expressed in the brain and adrenal and pituitary glands.

It localises to the cytoplasmic vesicle. It is found in the secretory vesicle. Its subcellular location is the neuronal dense core vesicle. The protein resides in the secreted. Its function is as follows. Strongly inhibits glucose induced insulin release from the pancreas. In terms of biological role, catestatin inhibits catecholamine release from chromaffin cells and noradrenergic neurons by acting as a non-competitive nicotinic cholinergic antagonist. Can induce mast cell migration, degranulation and production of cytokines and chemokines. Functionally, serpinin regulates granule biogenesis in endocrine cells by up-regulating the transcription of protease nexin 1 (SERPINE2) via a cAMP-PKA-SP1 pathway. This leads to inhibition of granule protein degradation in the Golgi complex which in turn promotes granule formation. Serpinin and pGlu-serpinin can enhance both myocardial contractility (inotropy) and relaxation (lusitropy) and this cardio-stimulation requires a beta 1-adrenergic receptor/adenylate cyclase/cAMP/PKA pathway. The chain is Chromogranin-A (Chga) from Rattus norvegicus (Rat).